Here is a 1233-residue protein sequence, read N- to C-terminus: Reverse gyrase 2 (1233 aa).

The RG N-terminal-type zinc-finger motif lies at 1 to 41; the sequence is MNTIPSSNYLSSCPNCGRVISAERLYKGSVCSECLEEDREF. Zn(2+) is bound by residues C13, C16, C31, and C34. ATP contacts are provided by residues Q89 and 106–113; that span reads APPGLGKT. The Helicase ATP-binding domain maps to 93 to 296; that stretch reads IIRVLRKESF…ALMGFRPGSS (204 aa). Positions 212 to 215 match the DEAD box motif; it reads DDVD. A topoisomerase I region spans residues 606-1233; sequence QKVKTVLFIV…DIYYEIKSIR (628 aa). Residues 610–774 enclose the Toprim domain; the sequence is TVLFIVESPN…NIKRAEFHEV (165 aa). E616 provides a ligand contact to Mg(2+). Residues 691–720 form an RG C-terminal-type; atypical zinc finger; the sequence is IKKCINGHQFTDFEQGNQCPKCHTTQIILD. Positions 694, 698, 709, and 712 each coordinate Zn(2+). Residue D743 coordinates Mg(2+). The 444-residue stretch at 790–1233 folds into the Topo IA-type catalytic domain; that stretch reads NVNLVKSQIV…DIYYEIKSIR (444 aa). The active-site O-(5'-phospho-DNA)-tyrosine intermediate is Y947.

The protein in the N-terminal section; belongs to the DEAD box helicase family. DDVD subfamily. It in the C-terminal section; belongs to the type IA topoisomerase family. Monomer. Zn(2+) is required as a cofactor. The cofactor is Mg(2+).

The protein localises to the cytoplasm. The enzyme catalyses ATP + H2O = ADP + phosphate + H(+). Modifies the topological state of DNA by introducing positive supercoils in an ATP-dependent process, increasing the linking number in steps of +1. Binds to single-stranded DNA, transiently cleaves and then rejoins the ends, introducing a positive supercoil in the process. The scissile phosphodiester is attacked by the catalytic tyrosine of the enzyme, resulting in the formation of a DNA-(5'-phosphotyrosyl)-enzyme intermediate. Probably involved in rewinding DNA strands in regions of the chromosome that have opened up to allow replication, transcription, DNA repair and/or for DNA protection. The protein is Reverse gyrase 2 of Sulfurisphaera tokodaii (strain DSM 16993 / JCM 10545 / NBRC 100140 / 7) (Sulfolobus tokodaii).